The primary structure comprises 591 residues: MGAARIAPSLALLLCCPVLSSAYALVDADDVFTKEEQIFLLHRAQAQCDKLLKEVLHTAANIMESDKGWTPASTSGKPRKEKASGKFYPESKENKDVPTGSRRRGRPCLPEWDNIVCWPLGAPGEVVAVPCPDYIYDFNHKGHAYRRCDRNGSWEVVPGHNRTWANYSECLKFMTNETREREVFDRLGMIYTVGYSMSLASLTVAVLILAYFRRLHCTRNYIHMHMFLSFMLRAASIFVKDAVLYSGFTLDEAERLTEEELHIIAQVPPPPAAAAVGYAGCRVAVTFFLYFLATNYYWILVEGLYLHSLIFMAFFSEKKYLWGFTIFGWGLPAVFVAVWVGVRATLANTGCWDLSSGHKKWIIQVPILASVVLNFILFINIIRVLATKLRETNAGRCDTRQQYRKLLRSTLVLVPLFGVHYTVFMALPYTEVSGTLWQIQMHYEMLFNSFQGFFVAIIYCFCNGEVQAEIRKSWSRWTLALDFKRKARSGSSSYSYGPMVSHTSVTNVGPRAGLSLPLSPRLPPATTNGHSQLPGHAKPGAPATETETLPVTMAVPKDDGFLNGSCSGLDEEASGSARPPPLLQEEWETVM.

An N-terminal signal peptide occupies residues 1 to 26 (MGAARIAPSLALLLCCPVLSSAYALV). At 27–188 (DADDVFTKEE…REREVFDRLG (162 aa)) the chain is on the extracellular side. 3 disulfides stabilise this stretch: Cys-48–Cys-117, Cys-108–Cys-148, and Cys-131–Cys-170. The disordered stretch occupies residues 67-104 (KGWTPASTSGKPRKEKASGKFYPESKENKDVPTGSRRR). The span at 81–96 (EKASGKFYPESKENKD) shows a compositional bias: basic and acidic residues. Asn-151, Asn-161, Asn-166, and Asn-176 each carry an N-linked (GlcNAc...) asparagine glycan. The helical transmembrane segment at 189–212 (MIYTVGYSMSLASLTVAVLILAYF) threads the bilayer. Topologically, residues 213–219 (RRLHCTR) are cytoplasmic. The chain crosses the membrane as a helical span at residues 220–239 (NYIHMHMFLSFMLRAASIFV). At 240–282 (KDAVLYSGFTLDEAERLTEEELHIIAQVPPPPAAAAVGYAGCR) the chain is on the extracellular side. The helical transmembrane segment at 283–306 (VAVTFFLYFLATNYYWILVEGLYL) threads the bilayer. The Cytoplasmic segment spans residues 307–320 (HSLIFMAFFSEKKY). A helical membrane pass occupies residues 321-342 (LWGFTIFGWGLPAVFVAVWVGV). Residues 343–361 (RATLANTGCWDLSSGHKKW) are Extracellular-facing. A helical transmembrane segment spans residues 362 to 382 (IIQVPILASVVLNFILFINII). Topologically, residues 383–409 (RVLATKLRETNAGRCDTRQQYRKLLRS) are cytoplasmic. A helical membrane pass occupies residues 410-428 (TLVLVPLFGVHYTVFMALP). Residues 429–440 (YTEVSGTLWQIQ) are Extracellular-facing. Residues 441–463 (MHYEMLFNSFQGFFVAIIYCFCN) traverse the membrane as a helical segment. The Cytoplasmic segment spans residues 464–591 (GEVQAEIRKS…LLQEEWETVM (128 aa)). An Important for interaction with G proteins motif is present at residues 474–477 (WSRW). Residues 516–544 (LPLSPRLPPATTNGHSQLPGHAKPGAPAT) form a disordered region.

It belongs to the G-protein coupled receptor 2 family. In terms of assembly, homodimer in the absence of bound ligand. Peptide hormone binding leads to dissociation of the homodimer. N-glycosylated.

Its subcellular location is the cell membrane. Its function is as follows. G-protein-coupled receptor for parathyroid hormone (PTH) and for parathyroid hormone-related peptide (PTHLH). Ligand binding causes a conformation change that triggers signaling via guanine nucleotide-binding proteins (G proteins) and modulates the activity of downstream effectors, such as adenylate cyclase (cAMP). PTH1R is coupled to G(s) G alpha proteins and mediates activation of adenylate cyclase activity. PTHLH dissociates from PTH1R more rapidly than PTH; as consequence, the cAMP response induced by PTHLH decays faster than the response induced by PTH. This Rattus norvegicus (Rat) protein is Parathyroid hormone/parathyroid hormone-related peptide receptor (Pth1r).